A 307-amino-acid chain; its full sequence is High-affinity branched-chain amino acid transport system permease protein BraD (307 aa).

10 consecutive transmembrane segments (helical) span residues 21-41 (YALIAIGYTMVYGIIGMINFA), 45-65 (VYMIGSYIAFIAITLLAMMGL), 70-90 (LMMLAAFAASIIVTSAFGYSI), 104-124 (LIPLISAIGMSIFLQNAVMLS), 132-152 (IPTLLPGNFVFGESSMNGVVI), 154-174 (YMQILIFVVTFLVMFGLTLFI), 203-223 (IIALTFVIGAALAAVAAVLLG), 224-244 (MQYGVINPGIGFLAGIKAFTA), 245-265 (AVLGGIGSIPGAMLGGLLLGV), and 280-300 (DVVAFGLLILVLLFRPTGILG).

It belongs to the binding-protein-dependent transport system permease family. LivHM subfamily.

The protein localises to the cell inner membrane. In terms of biological role, component of the high affinity leucine, isoleucine, valine, transport system (LIV-I), which is operative without Na(+) and is specific for alanine and threonine, in addition to branched-chain amino acids. This Pseudomonas aeruginosa (strain ATCC 15692 / DSM 22644 / CIP 104116 / JCM 14847 / LMG 12228 / 1C / PRS 101 / PAO1) protein is High-affinity branched-chain amino acid transport system permease protein BraD (braD).